The following is a 299-amino-acid chain: ATP phosphoribosyltransferase (299 aa).

Belongs to the ATP phosphoribosyltransferase family. Long subfamily. It depends on Mg(2+) as a cofactor.

It localises to the cytoplasm. It catalyses the reaction 1-(5-phospho-beta-D-ribosyl)-ATP + diphosphate = 5-phospho-alpha-D-ribose 1-diphosphate + ATP. The protein operates within amino-acid biosynthesis; L-histidine biosynthesis; L-histidine from 5-phospho-alpha-D-ribose 1-diphosphate: step 1/9. With respect to regulation, feedback inhibited by histidine. In terms of biological role, catalyzes the condensation of ATP and 5-phosphoribose 1-diphosphate to form N'-(5'-phosphoribosyl)-ATP (PR-ATP). Has a crucial role in the pathway because the rate of histidine biosynthesis seems to be controlled primarily by regulation of HisG enzymatic activity. The protein is ATP phosphoribosyltransferase of Campylobacter jejuni subsp. jejuni serotype O:23/36 (strain 81-176).